The chain runs to 355 residues: Chorismate synthase (355 aa).

Position 48 (arginine 48) interacts with NADP(+). FMN-binding positions include 125–127 (RSS), 238–239 (NA), glycine 278, 293–297 (KPASS), and arginine 319.

The protein belongs to the chorismate synthase family. Homotetramer. It depends on FMNH2 as a cofactor.

The enzyme catalyses 5-O-(1-carboxyvinyl)-3-phosphoshikimate = chorismate + phosphate. The protein operates within metabolic intermediate biosynthesis; chorismate biosynthesis; chorismate from D-erythrose 4-phosphate and phosphoenolpyruvate: step 7/7. In terms of biological role, catalyzes the anti-1,4-elimination of the C-3 phosphate and the C-6 proR hydrogen from 5-enolpyruvylshikimate-3-phosphate (EPSP) to yield chorismate, which is the branch point compound that serves as the starting substrate for the three terminal pathways of aromatic amino acid biosynthesis. This reaction introduces a second double bond into the aromatic ring system. The sequence is that of Chorismate synthase from Baumannia cicadellinicola subsp. Homalodisca coagulata.